A 310-amino-acid chain; its full sequence is Porphobilinogen deaminase (310 aa).

The residue at position 242 (C242) is an S-(dipyrrolylmethanemethyl)cysteine.

It belongs to the HMBS family. As to quaternary structure, monomer. The cofactor is dipyrromethane.

It catalyses the reaction 4 porphobilinogen + H2O = hydroxymethylbilane + 4 NH4(+). It participates in porphyrin-containing compound metabolism; protoporphyrin-IX biosynthesis; coproporphyrinogen-III from 5-aminolevulinate: step 2/4. In terms of biological role, tetrapolymerization of the monopyrrole PBG into the hydroxymethylbilane pre-uroporphyrinogen in several discrete steps. This Shewanella oneidensis (strain ATCC 700550 / JCM 31522 / CIP 106686 / LMG 19005 / NCIMB 14063 / MR-1) protein is Porphobilinogen deaminase.